A 121-amino-acid chain; its full sequence is Large ribosomal subunit protein bL20 (121 aa).

Belongs to the bacterial ribosomal protein bL20 family.

In terms of biological role, binds directly to 23S ribosomal RNA and is necessary for the in vitro assembly process of the 50S ribosomal subunit. It is not involved in the protein synthesizing functions of that subunit. The polypeptide is Large ribosomal subunit protein bL20 (rplT) (Chlamydia pneumoniae (Chlamydophila pneumoniae)).